The primary structure comprises 603 residues: MATIEEIAHQIIEQQMGEIVTEQQTGQKIQIVTALDHNTQGKQFILTNHDGSTPSKVILARQDSTPGKVFLTPDAAGVNQLFFTTPDLSAQHLQLLTDNSSPDQGPNKVFDLCVVCGDKASGRHYGAVTCEGCKGFFKRSIRKNLVYSCRGSKDCIINKHHRNRCQYCRLQRCIAFGMKQDSVQCERKPIEVSREKSSNCAASTEKIYIRKDLRSPLTATPTFVTDSETTRSTGLLDSGMFVNIHPSGVKTESTVLMTSDKAESCQGDLSTLASVVTSLANLGKTKDLSQNSNEMSMIESLSNDDTSLCEFQEMQTNGDVSRAFDTLAKALNPGESTACQSSVAGMEGSVHLITGDSSINYTEKEGPLLSDSHVAFRLTMPSPMPEYLNVHYIGESASRLLFLSMHWALSIPSFQALGQENSISLVKAYWNELFTLGLAQCWQVMNVATILATFVNCLHNSLQQDKMSTERRKLLMEHIFKLQEFCNSMVKLCIDGYEYAYLKAIVLFSPDHPGLENMEQIEKFQEKAYVEFQDYITKTYPDDTYRLSRLLLRLPALRLMNATITEELFFKGLIGNIRIDSVIPHILKMEPADYNSQIIGHSI.

The tract at residues 1–178 (MATIEEIAHQ…RLQRCIAFGM (178 aa)) is required for interaction with KAT2B. The nuclear receptor DNA-binding region spans 110-185 (FDLCVVCGDK…FGMKQDSVQC (76 aa)). NR C4-type zinc fingers lie at residues 113 to 133 (CVVCGDKASGRHYGAVTCEGC) and 149 to 168 (CRGSKDCIINKHHRNRCQYC). Phosphoserine is present on residues serine 197 and serine 215. Threonine 220 carries the post-translational modification Phosphothreonine. The residue at position 222 (threonine 222) is a Phosphothreonine; by MAPK1. A Glycyl lysine isopeptide (Lys-Gly) (interchain with G-Cter in SUMO); alternate cross-link involves residue lysine 250. Lysine 250 participates in a covalent cross-link: Glycyl lysine isopeptide (Lys-Gly) (interchain with G-Cter in SUMO2); alternate. The NR LBD domain maps to 348–590 (GSVHLITGDS…SVIPHILKME (243 aa)). Serine 581 carries the post-translational modification Phosphoserine; by PKC. Positions 584–603 (PHILKMEPADYNSQIIGHSI) are required for interaction with NRIP1. Lysine 588 is covalently cross-linked (Glycyl lysine isopeptide (Lys-Gly) (interchain with G-Cter in SUMO2)).

Belongs to the nuclear hormone receptor family. NR2 subfamily. Homodimer. Heterodimer; binds DNA as a heterodimer with NR2C2 required for chromatin remodeling and for binding to promoter regions such as globin DR1 repeats. Interacts with ESR1; the interaction prevents homodimerization of ESR1 and suppresses its transcriptional activity and cell growth. Interacts with NRIP1 (via its LXXLL motifs); the interaction provides corepressor activity. Interacts with HDAC3 (via the DNA-binding domain). Interacts with HDAC4 (via the DNA-binding domain). Interacts with PIAS1; the interaction is required for sumoylation of NR2C1. Interacts with UBE2I; the interaction is required for sumoylation of NR2C1. Interacts with KAT2B; the interaction acts as a corepressor of gene expression. Post-translationally, sumoylation requires both PIAS1 and UBE2I. Sumoylation appears to dissociate NR2C1 from the PML nuclear bodies. Enhances the interaction with NRIP1 but inhibits interaction with KAT2B. In proliferating cells, stimulation by all-trans retinoic acid, activation of MAPK1-mediated phosphorylation and recruitment to PML bodies with subsequent sumoylation, suppresses OCT4 expression. In terms of processing, phosphorylated on several serine and threonine residues. Phosphorylation on Thr-220, stimulated by all-trans retinoic acid (atRA) mediates PML location and sumoylation in proliferating cells which then modulates its association with effector molecules, KAT2B and NRIP1. Phosphorylation on Ser-581 by PKC is important for protein stability and function as activator of RARB.

The protein localises to the nucleus. The protein resides in the PML body. Its function is as follows. Orphan nuclear receptor. Binds the IR7 element in the promoter of its own gene in an autoregulatory negative feedback mechanism. Primarily repressor of a broad range of genes. Binds to hormone response elements (HREs) consisting of two 5'-AGGTCA-3' half site direct repeat consensus sequences. Together with NR2C2, forms the core of the DRED (direct repeat erythroid-definitive) complex that represses embryonic and fetal globin transcription. Also activator of OCT4 gene expression. May be involved in stem cell proliferation and differentiation. Mediator of retinoic acid-regulated preadipocyte proliferation. The sequence is that of Nuclear receptor subfamily 2 group C member 1 (NR2C1) from Macaca fascicularis (Crab-eating macaque).